Here is a 589-residue protein sequence, read N- to C-terminus: Protein FAM161B (589 aa).

Disordered stretches follow at residues 1 to 166 (MTVG…VCSW), 265 to 297 (KKEQ…RKIP), and 386 to 444 (AERR…GLAS). The segment covering 92 to 106 (PDSDLNDAEDEEDLE) has biased composition (acidic residues). Over residues 151–166 (TSDSGPPSQHRSVCSW) the composition is skewed to polar residues. Basic and acidic residues predominate over residues 265-275 (KKEQQKEDAPQ). Residues 287–297 (SPKKATSRKIP) are compositionally biased toward basic residues. The span at 386–396 (AERRETRETTR) shows a compositional bias: basic and acidic residues. Residues 510–577 (EEVFKAKLKE…ALKQAGLEEE (68 aa)) are a coiled coil.

This sequence belongs to the FAM161 family. As to quaternary structure, interacts with FAM161A.

The polypeptide is Protein FAM161B (Fam161b) (Mus musculus (Mouse)).